A 757-amino-acid polypeptide reads, in one-letter code: Neutral ceramidase 2 (757 aa).

The N-terminal stretch at 1–25 is a signal peptide; it reads MAVSLPLFQFILFLLLLLLSRTVYA. N-linked (GlcNAc...) asparagine glycosylation occurs at N311. S330 functions as the Nucleophile in the catalytic mechanism. N348 and N657 each carry an N-linked (GlcNAc...) asparagine glycan.

This sequence belongs to the neutral ceramidase family.

It localises to the secreted. It is found in the endoplasmic reticulum. Its subcellular location is the golgi apparatus. It catalyses the reaction an N-acylsphing-4-enine + H2O = sphing-4-enine + a fatty acid. Its function is as follows. Hydrolyzes the sphingolipid ceramide into sphingosine and free fatty acid. This Arabidopsis thaliana (Mouse-ear cress) protein is Neutral ceramidase 2.